The primary structure comprises 216 residues: Guanylate kinase (216 aa).

The region spanning 11 to 189 (GVLIVISGPS…AVKKIEAILL (179 aa)) is the Guanylate kinase-like domain. 18-25 (GPSGAGKG) provides a ligand contact to ATP.

This sequence belongs to the guanylate kinase family.

It localises to the cytoplasm. The catalysed reaction is GMP + ATP = GDP + ADP. In terms of biological role, essential for recycling GMP and indirectly, cGMP. In Clostridium perfringens (strain 13 / Type A), this protein is Guanylate kinase (gmk).